The chain runs to 74 residues: Benzylsuccinate synthase beta subunit (74 aa).

As to quaternary structure, heterohexamer composed of 2 alpha subunits, 2 beta subunits and 2 gamma subunits.

It catalyses the reaction toluene + fumarate = 2-benzylsuccinate. It functions in the pathway xenobiotic degradation; toluene degradation. With respect to regulation, activated by the benzylsuccinate synthase activating enzyme BssD. Rapidly inactivated by oxygen. Its function is as follows. Catalyzes the addition of fumarate to the methyl group of toluene, leading to the formation of benzylsuccinate. The polypeptide is Benzylsuccinate synthase beta subunit (bssB) (Thauera aromatica).